The primary structure comprises 275 residues: Large ribosomal subunit protein uL2 (275 aa).

The tract at residues 224-257 (AMNPIDHPHGGGEGRTAAGRDPVSPWGTPTKGFR) is disordered.

It belongs to the universal ribosomal protein uL2 family. In terms of assembly, part of the 50S ribosomal subunit. Forms a bridge to the 30S subunit in the 70S ribosome.

Functionally, one of the primary rRNA binding proteins. Required for association of the 30S and 50S subunits to form the 70S ribosome, for tRNA binding and peptide bond formation. It has been suggested to have peptidyltransferase activity; this is somewhat controversial. Makes several contacts with the 16S rRNA in the 70S ribosome. The protein is Large ribosomal subunit protein uL2 of Burkholderia mallei (strain NCTC 10247).